A 40-amino-acid chain; its full sequence is Natriuretic peptide PpNP-b (40 aa).

Residues 1 to 8 (SGSKTANI) constitute a propeptide that is removed on maturation. Cys12 and Cys28 form a disulfide bridge. The interval 20–40 (IGTTSGMGCGRPRPKPTPGGS) is disordered.

Belongs to the natriuretic peptide family. As to expression, expressed by the venom gland.

Its subcellular location is the secreted. Functionally, snake venom natriuretic peptide that targets both NPR1 and NPR2. Exhibits hypotensive and vasodepressor activities. This chain is Natriuretic peptide PpNP-b, found in Pseudechis porphyriacus (Red-bellied black snake).